We begin with the raw amino-acid sequence, 448 residues long: MLQQPAGGYTTLEQFTFTIRNDGTNATPTQFLQLLSYEATENELVKKAIPTPETHLPSARNVPGNVYIEDAITQALFGISAQNVNAHGYFSRLSALALPNTSARLGLDGVIYNNETVGIPFYDPVAVAKFATTYAKLGNASTPRYRADMIDIYAHVGLELAGTDAERAAGVMPVKRAKFDSWEGSLISLSRDVVYWKNLAFLIDLCSLEGDALNTFKTRNRDAFRMMLFIMSTAVAANVVNRKVTKRVDRVIEYIGSNSMRTAGRTATITYDLSRHEFAAKFLQLTFTKWNATQATTRSMPDMRTPRTSVTSAGESALVRHNRYMTESFKGLSPIALAQKKHEMMLHTHEIHSMDIDGSIKNMVERETVNKMNEIDAMNTMSWKEEIHAVEQTTVHGTHQMSADPEQTQLISQETAVITHRASSDADENEYGNSVSEMTIGTHSDDIL.

Positions 418–448 (ITHRASSDADENEYGNSVSEMTIGTHSDDIL) are disordered. Over residues 431–442 (YGNSVSEMTIGT) the composition is skewed to polar residues.

It localises to the virion. The sequence is that of Putative structural protein VP5 (S8) from Lymantria dispar cypovirus 1 (isolate Rao) (LdCPV-1).